A 152-amino-acid polypeptide reads, in one-letter code: Large ribosomal subunit protein bL9 (152 aa).

It belongs to the bacterial ribosomal protein bL9 family.

Functionally, binds to the 23S rRNA. This is Large ribosomal subunit protein bL9 from Synechococcus sp. (strain RCC307).